Here is a 210-residue protein sequence, read N- to C-terminus: Isomeliandiol synthase ISM1 (210 aa).

5 consecutive transmembrane segments (helical) span residues 17–37 (FTLH…TWFI), 50–70 (LLCW…YFVF), 107–127 (IEGM…YAIV), 135–155 (ILQF…FLTA), and 172–192 (YYVG…INFW). An EXPERA domain is found at 46-188 (GDRLLLCWWA…IWIIVPSLIA (143 aa)).

It belongs to the EBP family.

It localises to the membrane. It carries out the reaction 7,8-epoxymelianol = isomeliandiol. Its pathway is secondary metabolite biosynthesis; terpenoid biosynthesis. Its function is as follows. Isomerase involved in the biosynthesis of limonoids and quassinoids triterpene natural products such as ailanthone, chaparrinone, glaucarubinone and amarolide, allelopathic degraded triterpene lactones inhibiting the growth of other plants, and possessing antimalarial, antifeedant, insecticidal, anti-inflammatory and anticancer activities. Catalyzes the conversion of 7,8-epoxymelianol to isomeliandiol via skeletal rearrangements. The sequence is that of Isomeliandiol synthase ISM1 from Ailanthus altissima (Tree-of-heaven).